Consider the following 264-residue polypeptide: GATA transcription factor 2 (264 aa).

Residues 29–42 (SSSGGSTAATSSSS) are compositionally biased toward low complexity. 2 disordered regions span residues 29–57 (SSSG…HHLP) and 96–192 (NPLG…TPQW). A compositionally biased stretch (polar residues) spans 101 to 110 (TMTSVKTETS). The short motif at 114 to 121 (KPRSKRSR) is the Nuclear localization signal element. Residues 155 to 164 (SGGGGGGGGR) show a composition bias toward gly residues. The GATA-type zinc-finger motif lies at 175–229 (GGGMRRCTHCASEKTPQWRTGPLGPKTLCNACGVRFKSGRLVPEYRPASSPTFVL).

Belongs to the type IV zinc-finger family. Class A subfamily. In terms of tissue distribution, mostly expressed in roots. Also expressed in flowers and leaves, and to a lower extent in stems.

The protein localises to the nucleus. Transcriptional activator that specifically binds 5'-GATA-3' or 5'-GAT-3' motifs within gene promoters. May be involved in the regulation of some light-responsive genes. This Arabidopsis thaliana (Mouse-ear cress) protein is GATA transcription factor 2 (GATA2).